A 1020-amino-acid polypeptide reads, in one-letter code: MATLSQPQSALPKTKIATTFGLSKDLKSPISVKVCYLECTRNNVSLVPLSTKFEDPTVFKKLSQIYKNSDLFVEIRVYDGKNNNLISTPVRTSYKAFNNKGRTWNQQLKLNIDYNQISIDAYLKFSICEIIDTKPSVFGVSYLSLFSHDSSTLRSGSHKIPVFMEDDPQYSKNIQYGTLIGLTDLEKRLIDYENGKYPRLNWLDKMVLPKVDATFLKTNNKDHDYYLYIELPQFEFPIVYSDIIYQIPTIEPITETTSKIPPDDTLNSNIIINSIDIPMATSHDPSIMKVYDPDFHITANNHLNPNATTFDPVELKYRKLERNIDNNTILDKELKPTPQLRDELLRIMIKPSNAELTDNEKNLIWKFRYYFSKNNSGNDPSNKSVKSFLPKFLRSINWENDYELDHTFKEIIPFYWNVDKLQIGDALELLGDYFNPYTLGKPTYQDDSMTSKSSKMKSDEKRFIKIYNNVCFLRKLAVERLKLANSEELLLYLLQLVQALKYEALIYEKSPPFCERSDQIEDNASSTLKSPLADFLIERAVENEKLGNFFYWYVKVENEDQLNNPHIDGPIKIYMDILNRYIELLKAHCHENRLPYYKHLKHQIWFIKKLTSLVELLRASFKKNEATAKKVEYLREYLANSGNELLKFPEPFPLPLDPSVMICGCYPEESSVFKSSLAPLKITLKTIEKKKHGHATSQLFGKRSRYGKYPLMFKIGDDLRQDQLVIQIIDLMDQLLKNENLDLKLTPYKILATSPISGLIQFVPNETLDSILSKTYPTSVTYSGGGETSDVPPSVSNNGILNYLRLHSQEQQSEEPISKSILSTNTSQSNTEIPVLPRQPKPTITSDLGVSPILMDNYVKSCAGYCVITYILGVGDRHLDNLLLSPNGKFWHADFGYILGRDPKPFPPLMKLPIQVIDGMGGLHHENYNVFKSYCFITYTTLRKNSNLILNLFQLMLDANIPDIQFDPSRVIEKVQEKFCLQMTEEEAILHFQNLINDSVNAFLPVVIDRLHSLAQYWRA.

A C2 PI3K-type domain is found at 49 to 210 (LSTKFEDPTV…NWLDKMVLPK (162 aa)). One can recognise a PIK helical domain in the interval 331 to 577 (DKELKPTPQL…DGPIKIYMDI (247 aa)). One can recognise a PI3K/PI4K catalytic domain in the interval 666–1004 (YPEESSVFKS…LINDSVNAFL (339 aa)). The G-loop stretch occupies residues 672–678 (VFKSSLA). The catalytic loop stretch occupies residues 873 to 881 (GVGDRHLDN). Residues 892–913 (HADFGYILGRDPKPFPPLMKLP) are activation loop.

The protein belongs to the PI3/PI4-kinase family. In terms of assembly, component of the autophagy-specific VPS34 PI3-kinase complex I composed of at least VPS15, VPS30, VPS34, and of the VPS34 PI3-kinase complex II composed of VPS15, VPS30, VPS34 and VPS38. Interacts with VMNA7. Post-translationally, autophosphorylated.

It localises to the golgi apparatus. It is found in the trans-Golgi network membrane. The protein localises to the endosome membrane. It catalyses the reaction a 1,2-diacyl-sn-glycero-3-phospho-(1D-myo-inositol) + ATP = a 1,2-diacyl-sn-glycero-3-phospho-(1D-myo-inositol-3-phosphate) + ADP + H(+). In terms of biological role, multifunctional phosphatidylinositol 3-kinase involved in acidification of vacuoles, pH-dependent cell growth, and autophagocytosis. Plays an important role in protein transport and virulence. Component of the autophagy-specific VPS34 PI3-kinase complex I essential to recruit the ATG8-phosphatidylinositol conjugate and the ATG12-ATG5 conjugate to the pre-autophagosomal structure. Also involved in endosome-to-Golgi retrograde transport as part of the VPS34 PI3-kinase complex II. This second complex is required for the endosome-to-Golgi retrieval of PEP1 and KEX2, and the recruitment of VPS5 and VPS7, two components of the retromer complex, to endosomal membranes (probably through the synthesis of a specific pool of phosphatidylinositol 3-phosphate recruiting the retromer to the endosomes). Finally, it might also be involved in ethanol tolerance and cell wall integrity. This Candida albicans (strain SC5314 / ATCC MYA-2876) (Yeast) protein is Phosphatidylinositol 3-kinase VPS34.